The chain runs to 430 residues: Tryptophan synthase beta chain (430 aa).

Lys95 is subject to N6-(pyridoxal phosphate)lysine.

It belongs to the TrpB family. In terms of assembly, tetramer of two alpha and two beta chains. It depends on pyridoxal 5'-phosphate as a cofactor.

It catalyses the reaction (1S,2R)-1-C-(indol-3-yl)glycerol 3-phosphate + L-serine = D-glyceraldehyde 3-phosphate + L-tryptophan + H2O. It participates in amino-acid biosynthesis; L-tryptophan biosynthesis; L-tryptophan from chorismate: step 5/5. Its function is as follows. The beta subunit is responsible for the synthesis of L-tryptophan from indole and L-serine. The protein is Tryptophan synthase beta chain of Halobacterium salinarum (strain ATCC 29341 / DSM 671 / R1).